A 125-amino-acid chain; its full sequence is Small ribosomal subunit protein uS13 (125 aa).

The segment at 90-125 (TRHRRGLPVRGQRTHTNARTKKGPRRAIAGKKKVTK) is disordered.

This sequence belongs to the universal ribosomal protein uS13 family. In terms of assembly, part of the 30S ribosomal subunit. Forms a loose heterodimer with protein S19. Forms two bridges to the 50S subunit in the 70S ribosome.

In terms of biological role, located at the top of the head of the 30S subunit, it contacts several helices of the 16S rRNA. In the 70S ribosome it contacts the 23S rRNA (bridge B1a) and protein L5 of the 50S subunit (bridge B1b), connecting the 2 subunits; these bridges are implicated in subunit movement. Contacts the tRNAs in the A and P-sites. The chain is Small ribosomal subunit protein uS13 from Gemmatimonas aurantiaca (strain DSM 14586 / JCM 11422 / NBRC 100505 / T-27).